The chain runs to 442 residues: Trigger factor (442 aa).

A PPIase FKBP-type domain is found at 163 to 248 (YDRVTINYCI…IIKIEKKQEL (86 aa)).

This sequence belongs to the FKBP-type PPIase family. Tig subfamily.

Its subcellular location is the cytoplasm. The catalysed reaction is [protein]-peptidylproline (omega=180) = [protein]-peptidylproline (omega=0). Its function is as follows. Involved in protein export. Acts as a chaperone by maintaining the newly synthesized protein in an open conformation. Functions as a peptidyl-prolyl cis-trans isomerase. In Buchnera aphidicola subsp. Acyrthosiphon pisum (strain Tuc7), this protein is Trigger factor.